A 364-amino-acid chain; its full sequence is UDP-arabinopyranose mutase 1 (364 aa).

Residues 110-112 (DDD) carry the DXD motif motif. Arg-158 carries an N-linked (Glc...) arginine glycan.

The protein belongs to the RGP family. In terms of assembly, heteromers with UAM2 and UAM3. Mn(2+) serves as cofactor. The cofactor is Mg(2+). In terms of processing, reversibly glycosylated in vitro at Arg-158 by UDP-glucose. Reversibly glycosylated by UDP-xylose and UDP-galactose.

It is found in the golgi apparatus. The catalysed reaction is UDP-beta-L-arabinofuranose = UDP-beta-L-arabinopyranose. UDP-L-arabinose mutase involved in the biosynthesis of cell wall non-cellulosic polysaccharides. Catalyzes the interconvertion of UDP-L-arabinopyranose (UDP-Arap) and UDP-L-arabinofuranose (UDP-Araf). Preferentially catalyzes the formation of UDP-Arap from UDP-Araf. At thermodynamic equilibrium in vitro the ratio of the pyranose form over the furanose form is 90:10. Is probably active as heteromer in vivo. This chain is UDP-arabinopyranose mutase 1, found in Oryza sativa subsp. japonica (Rice).